Reading from the N-terminus, the 188-residue chain is Peroxiredoxin y4vD (188 aa).

Residues 2-152 form the Thioredoxin domain; it reads PVKKRVPFVA…VEQWFEEEGF (151 aa). Cysteine 56 acts as the Cysteine sulfenic acid (-SOH) intermediate (for peroxiredoxin activity) in catalysis.

The protein belongs to the peroxiredoxin family. Prx5 subfamily. Monomer.

The catalysed reaction is a hydroperoxide + 2 glutathione = an alcohol + glutathione disulfide + H2O. Functionally, thiol-specific peroxidase that catalyzes the reduction of hydrogen peroxide and organic hydroperoxides to water and alcohols, respectively. Plays a role in cell protection against oxidative stress by detoxifying peroxides. In Sinorhizobium fredii (strain NBRC 101917 / NGR234), this protein is Peroxiredoxin y4vD.